We begin with the raw amino-acid sequence, 436 residues long: MTVTSDFTQKLYENFAENTKLRAVENAVTKNGLLSSLEVRGSHAANLPEFSIDLTKDPVTNQKQSGRCWMFAALNTFRHKFINEFKTEDFEFSQAYTFFWDKYEKSNWFMEQIIGDIEMDDRRLKFLLQTPQQDGGQWDMMVAIFEKYGIVPKAVYPESQASSSSRELNQYLNKLLRQDAEILRYTIEQGGDVEAVKEELLQEVFNFLAVTLGLPPQNFEFAFRNKDNEYKKFVGSPKEFYNEYVGIDLNNYVSVINAPTADKPYNKSYTVEFLGNVVGGKEVKHLNVEMDRFKKLAIAQMQAGETVWFGCDVGQESNRSAGLLTMDSYDFKSSLDIEFTQSKAGRLDYGESLMTHAMVLAGVDLDADGNSTKWKVENSWGKDAGQKGYFVASDEWMDEYTYQIVVRKDLLTEEELAAYEEKPQVLLPWDPMGALA.

Catalysis depends on residues Cys68, His356, and Asn378.

The protein belongs to the peptidase C1 family. Homohexamer.

The enzyme catalyses Inactivates bleomycin B2 (a cytotoxic glycometallopeptide) by hydrolysis of a carboxyamide bond of beta-aminoalanine, but also shows general aminopeptidase activity. The specificity varies somewhat with source, but amino acid arylamides of Met, Leu and Ala are preferred.. Functionally, hydrolyzes naphthylamide-substituted amino acids as well as di- and tripeptides in which the half-cystine residue is involved in a disulfide loop, notably in oxytocin and vasopressin. Also has a bleomycin hydrolase activity. The sequence is that of Aminopeptidase C (pepC) from Lactococcus lactis subsp. lactis (strain IL1403) (Streptococcus lactis).